The chain runs to 513 residues: MTAPWAALALLWGSLCAGSGRGEAETRECIYYNANWELERTNQSGLERCEGEQDKRLHCYASWRNSSGTIELVKKGCWLDDFNCYDRQECVATEENPQVYFCCCEGNFCNERFTHLPEPGGPEVTYEPPPTAPTLLTVLAYSLLPIGGLSLIVLLAFWMYRHRKPPYGHVDIHEDPGPPPPSPLVGLKPLQLLEIKARGRFGCVWKAQLMNDFVAVKIFPLQDKQSWQSEREIFSTPGMKHENLLQFIAAEKRGCSNLEVELWLITAFHDKGSLTDYLKGNIITWNELCHVAETMSRGLSYLHEDVPWCRGEGHKPSIAHRDFKSKNVLLKSDLTAVLADFGLAVRFEPGKPPGDTHGQVGTRRYMAPEVLEGAINFQRDAFLRIDMYAMGLVLWELVSRCKAADGPVDEYMLPFEEEIGQHPSLEELQEVVVHKKMRPTIKDHWLKHPGLAQLCVTIEECWDHDAEARLSAGCVEERVSLIRRSVNSSTSDCLVSLVTSVTNVDLLPKESSI.

Residues 1-18 form the signal peptide; it reads MTAPWAALALLWGSLCAG. At 19–137 the chain is on the extracellular side; the sequence is SGRGEAETRE…PPPTAPTLLT (119 aa). 5 cysteine pairs are disulfide-bonded: Cys29-Cys59, Cys49-Cys77, Cys84-Cys103, Cys90-Cys102, and Cys104-Cys109. Residues Asn42 and Asn65 are each glycosylated (N-linked (GlcNAc...) asparagine). The helical transmembrane segment at 138–158 threads the bilayer; sequence VLAYSLLPIGGLSLIVLLAFW. Residues 159–513 are Cytoplasmic-facing; sequence MYRHRKPPYG…VDLLPKESSI (355 aa). The Protein kinase domain occupies 190–481; it reads LQLLEIKARG…AGCVEERVSL (292 aa). Residues 196–204 and Lys217 each bind ATP; that span reads KARGRFGCV. The active-site Proton acceptor is the Asp322. An interaction with DYNLT1 region spans residues 492 to 513; it reads DCLVSLVTSVTNVDLLPKESSI.

It belongs to the protein kinase superfamily. TKL Ser/Thr protein kinase family. TGFB receptor subfamily. In terms of assembly, forms an activin receptor complex with activin type II receptors such as ACVR1B. Interacts with VPS39. Interacts with DYNLT1. Interacts with BMP3. Interacts with BMP2. Mg(2+) serves as cofactor. The cofactor is Mn(2+). Phosphorylated. Constitutive phosphorylation is in part catalyzed by its own kinase activity.

It is found in the cell membrane. The catalysed reaction is L-threonyl-[receptor-protein] + ATP = O-phospho-L-threonyl-[receptor-protein] + ADP + H(+). It catalyses the reaction L-seryl-[receptor-protein] + ATP = O-phospho-L-seryl-[receptor-protein] + ADP + H(+). Transmembrane serine/threonine kinase activin type-2 receptor forming an activin receptor complex with activin type-1 serine/threonine kinase receptors (ACVR1, ACVR1B or ACVR1c). Transduces the activin signal from the cell surface to the cytoplasm and is thus regulating many physiological and pathological processes including neuronal differentiation and neuronal survival, hair follicle development and cycling, FSH production by the pituitary gland, wound healing, extracellular matrix production, immunosuppression and carcinogenesis. Activin is also thought to have a paracrine or autocrine role in follicular development in the ovary. Within the receptor complex, the type-2 receptors act as a primary activin receptors (binds activin-A/INHBA, activin-B/INHBB as well as inhibin-A/INHA-INHBA). The type-1 receptors like ACVR1B act as downstream transducers of activin signals. Activin binds to type-2 receptor at the plasma membrane and activates its serine-threonine kinase. The activated receptor type-2 then phosphorylates and activates the type-1 receptor. Once activated, the type-1 receptor binds and phosphorylates the SMAD proteins SMAD2 and SMAD3, on serine residues of the C-terminal tail. Soon after their association with the activin receptor and subsequent phosphorylation, SMAD2 and SMAD3 are released into the cytoplasm where they interact with the common partner SMAD4. This SMAD complex translocates into the nucleus where it mediates activin-induced transcription. Inhibitory SMAD7, which is recruited to ACVR1B through FKBP1A, can prevent the association of SMAD2 and SMAD3 with the activin receptor complex, thereby blocking the activin signal. Activin signal transduction is also antagonized by the binding to the receptor of inhibin-B via the IGSF1 inhibin coreceptor. The sequence is that of Activin receptor type-2B (Acvr2b) from Rattus norvegicus (Rat).